The chain runs to 106 residues: Small ribosomal subunit protein uS10 (106 aa).

This sequence belongs to the universal ribosomal protein uS10 family. In terms of assembly, part of the 30S ribosomal subunit.

Functionally, involved in the binding of tRNA to the ribosomes. The sequence is that of Small ribosomal subunit protein uS10 from Parasynechococcus marenigrum (strain WH8102).